Consider the following 524-residue polypeptide: Butyrophilin subfamily 1 member A1 (524 aa).

The N-terminal stretch at M1–S26 is a signal peptide. Residues A27 to W247 lie on the Extracellular side of the membrane. 2 consecutive Ig-like V-type domains span residues P29–K141 and P149–S235. 2 disulfides stabilise this stretch: C51–C125 and C165–C219. Residues N56 and N216 are each glycosylated (N-linked (GlcNAc...) asparagine). Residues I248–F268 form a helical membrane-spanning segment. Residues T269–P524 lie on the Cytoplasmic side of the membrane. A B30.2/SPRY domain is found at S286–P480.

Belongs to the immunoglobulin superfamily. BTN/MOG family. As to quaternary structure, seems to associate with xanthine dehydrogenase/oxidase. In terms of processing, N-glycosylated. Strongly expressed in lactating mammary tissue (at protein level). About 100-fold lower levels in virgin mammary tissue. Also detected in spleen and thymus at 10-20 times lower levels compared to those detected in virgin mammary gland. Very low levels in several other tissues, including brain, heart, kidney, lymph node, lung and small intestine. In the thymus, detected in the stroma, in epithelial cells (at protein level). Most prominent in medullary areas of the thymus and at the corticomedullary junction (at protein level).

It localises to the membrane. Its function is as follows. May function in the secretion of milk-fat droplets. May act as a specific membrane-associated receptor for the association of cytoplasmic droplets with the apical plasma membrane. Inhibits the proliferation of CD4 and CD8 T-cells activated by anti-CD3 antibodies, T-cell metabolism and IL2 and IFNG secretion. The chain is Butyrophilin subfamily 1 member A1 (Btn1a1) from Mus musculus (Mouse).